The chain runs to 31 residues: U14-ctenitoxin-Co1a (31 aa).

In terms of processing, disulfide bonds are present. As to expression, expressed by the venom gland.

The protein resides in the secreted. In terms of biological role, omega-agatoxins are antagonists of voltage-gated calcium channels (Cav). The sequence is that of U14-ctenitoxin-Co1a from Ctenus ornatus (Brazilian spider).